The sequence spans 859 residues: Leucine--tRNA ligase (859 aa).

The 'HIGH' region motif lies at 42-52; that stretch reads PYPSGRLHMGH. Residues 618–622 carry the 'KMSKS' region motif; that stretch reads KMSKS. Residue Lys621 participates in ATP binding.

This sequence belongs to the class-I aminoacyl-tRNA synthetase family.

The protein localises to the cytoplasm. It catalyses the reaction tRNA(Leu) + L-leucine + ATP = L-leucyl-tRNA(Leu) + AMP + diphosphate. This Shewanella pealeana (strain ATCC 700345 / ANG-SQ1) protein is Leucine--tRNA ligase.